Reading from the N-terminus, the 326-residue chain is Phosphotriesterase homology protein (326 aa).

Residues H22, H24, K145, H178, H207, and D264 each coordinate Zn(2+). Residue K145 is modified to N6-carboxylysine.

It belongs to the metallo-dependent hydrolases superfamily. Phosphotriesterase family. Zn(2+) is required as a cofactor.

This Mycobacterium tuberculosis (strain CDC 1551 / Oshkosh) protein is Phosphotriesterase homology protein (php).